Here is a 153-residue protein sequence, read N- to C-terminus: Superoxide dismutase [Cu-Zn] (153 aa).

Cu cation is bound by residues H46, H48, and H63. C57 and C146 are oxidised to a cystine. The tract at residues 61-80 is disordered; that stretch reads GPHFNPFGKEHGAPEDENRH. Zn(2+) contacts are provided by H63, H71, H80, and D83. A compositionally biased stretch (basic and acidic residues) spans 68–80; that stretch reads GKEHGAPEDENRH. H120 contacts Cu cation. Positions 124–136 are enriched in basic and acidic residues; that stretch reads DDLGRSEHPESKK. The tract at residues 124-143 is disordered; sequence DDLGRSEHPESKKTGNAGAR. Residue R143 coordinates substrate.

The protein belongs to the Cu-Zn superoxide dismutase family. In terms of assembly, homodimer. Requires Cu cation as cofactor. It depends on Zn(2+) as a cofactor.

It is found in the cytoplasm. It carries out the reaction 2 superoxide + 2 H(+) = H2O2 + O2. Destroys radicals which are normally produced within the cells and which are toxic to biological systems. This is Superoxide dismutase [Cu-Zn] (sodC) from Aspergillus flavus.